A 213-amino-acid chain; its full sequence is ATP-dependent dethiobiotin synthetase BioD (213 aa).

12–17 (NVGKTF) provides a ligand contact to ATP. T16 is a binding site for Mg(2+). Residue K36 is part of the active site. Substrate is bound at residue S40. ATP is bound by residues D53, 110 to 113 (EGTG), and 170 to 171 (NQ). Mg(2+) is bound by residues D53 and E110.

Belongs to the dethiobiotin synthetase family. As to quaternary structure, homodimer. Mg(2+) is required as a cofactor.

The protein resides in the cytoplasm. The enzyme catalyses (7R,8S)-7,8-diammoniononanoate + CO2 + ATP = (4R,5S)-dethiobiotin + ADP + phosphate + 3 H(+). The protein operates within cofactor biosynthesis; biotin biosynthesis; biotin from 7,8-diaminononanoate: step 1/2. In terms of biological role, catalyzes a mechanistically unusual reaction, the ATP-dependent insertion of CO2 between the N7 and N8 nitrogen atoms of 7,8-diaminopelargonic acid (DAPA, also called 7,8-diammoniononanoate) to form a ureido ring. The sequence is that of ATP-dependent dethiobiotin synthetase BioD from Ruthia magnifica subsp. Calyptogena magnifica.